Reading from the N-terminus, the 77-residue chain is Putative defensin-like protein 160 (77 aa).

Positions 1–24 (MAKLSCSYFFILMLVFSALLMVEC) are cleaved as a signal peptide. 4 disulfide bridges follow: cysteine 30–cysteine 77, cysteine 40–cysteine 59, cysteine 45–cysteine 71, and cysteine 49–cysteine 73.

The protein belongs to the DEFL family.

The protein resides in the secreted. This chain is Putative defensin-like protein 160 (LCR26), found in Arabidopsis thaliana (Mouse-ear cress).